Consider the following 1035-residue polypeptide: NHS-like protein 3 (1035 aa).

A lipid anchor (N-myristoyl glycine) is attached at Val-2. 3 disordered regions span residues 23-44 (KAENDKHLSVGPGQGPGSAVDE), 76-105 (QEKQKLNKGGWDHGDTQSIQSSRTGPDEDN), and 133-162 (IQRKGSTFRPHDSFPKSGKSGRRRRERRST). Residues 76 to 90 (QEKQKLNKGGWDHGD) show a composition bias toward basic and acidic residues. Phosphoserine is present on residues Ser-93, Ser-138, Ser-145, and Ser-161. A Phosphothreonine modification is found at Thr-162. Ser-215 carries the phosphoserine modification. The residue at position 320 (Arg-320) is an Asymmetric dimethylarginine. A phosphoserine mark is found at Ser-322, Ser-327, Ser-330, Ser-338, Ser-339, Ser-341, and Ser-342. Disordered stretches follow at residues 332-869 (RSLG…APSS) and 885-1035 (SEGL…KELA). Positions 338 to 365 (SSVSSPQPRSRHPSSSSDTWSHSQSSDT) are enriched in low complexity. Residues 366-388 (IVSDGSTLSSKGGSEGQPESSTA) show a composition bias toward polar residues. 3 positions are modified to phosphoserine: Ser-400, Ser-404, and Ser-409. The segment covering 411–429 (AEASDTLSIRSSGQLSGRS) has biased composition (polar residues). The segment covering 431–449 (SLRKLKRPPPPPRRTHSLH) has biased composition (basic residues). Residues 517–532 (RTLSPSSGYSSQSGTP) show a composition bias toward low complexity. Thr-531 is subject to Phosphothreonine. Residues 543–552 (PASPGKAQPP) show a composition bias toward pro residues. Ser-545 carries the post-translational modification Phosphoserine. The segment covering 562 to 589 (SPGASVSSSLTSLCSSSSDPAPSDRSGP) has biased composition (low complexity). Position 593 is a phosphothreonine (Thr-593). The segment covering 602–624 (PPHPKVPAPFSPPPSKPRSPNPA) has biased composition (pro residues). Ser-612 bears the Phosphoserine mark. Low complexity-rich tracts occupy residues 625 to 645 (APALAAPAVVPGPVSTTDASP) and 652 to 662 (QTTLTPLQESP). Phosphoserine is present on residues Ser-669 and Ser-673. Pro residues-rich tracts occupy residues 669–685 (SPPPSPPPSYHPPPPPT) and 709–718 (NWPPPPPPAP). Residues 737-765 (SVASPEPAGPSGSPELVSSPAASSSSATA) are compositionally biased toward low complexity. The span at 771–784 (PGSPDPPPAPPAPA) shows a compositional bias: pro residues. The span at 838 to 848 (GAPTPALGPSA) shows a compositional bias: low complexity. A phosphoserine mark is found at Ser-858, Ser-862, and Ser-868. The span at 894-906 (NGPPEAEPRPPQS) shows a compositional bias: pro residues. Ser-929, Ser-959, Ser-971, and Ser-979 each carry phosphoserine. Over residues 961–980 (KAPPPVARKPSVGVPPPASP) the composition is skewed to pro residues. A compositionally biased stretch (basic and acidic residues) spans 999-1008 (TQDRTKRELA).

In terms of tissue distribution, expressed in lung.

Its function is as follows. Able to directly activate the TNF-NFkappaB signaling pathway. The sequence is that of NHS-like protein 3 from Homo sapiens (Human).